The chain runs to 398 residues: Odorant receptor 24a (398 aa).

At 1-14 (MLPRFLTASYPMER) the chain is on the cytoplasmic side. Residues 15 to 31 (HYFMVPKFALSLIGFYP) traverse the membrane as a helical segment. At 32–46 (EQKRTVLVKLWSFFN) the chain is on the extracellular side. The helical transmembrane segment at 47–67 (FFILTYGCYAEAYYGIHYIPI) threads the bilayer. Topologically, residues 68 to 74 (NIATALD) are cytoplasmic. A helical membrane pass occupies residues 75-95 (ALCPVASSILSLVKMVAIWWY). The Extracellular portion of the chain corresponds to 96–124 (QDELRSLIERVRFLTEQQKSKRKLGYKKR). Residues 125 to 145 (FYTLATQLTFLLLCCGFCTST) traverse the membrane as a helical segment. Residues 146 to 199 (SYSVRHLIDNILRRTHGKDWIYETPFKMMFPDLLLRLPLYPITYILVHWHGYIT) lie on the Cytoplasmic side of the membrane. The chain crosses the membrane as a helical span at residues 200 to 220 (VVCFVGADGFFLGFCLYFTVL). Residues 221–269 (LLCLQDDVCDLLEVENIEKSPSEAEEARIVREMEKLVDRHNEVAELTER) lie on the Extracellular side of the membrane. Residues 270-290 (LSGVMVEITLAHFVTSSLIIG) form a helical membrane-spanning segment. Topologically, residues 291 to 295 (TSVVD) are cytoplasmic. Residues 296 to 316 (ILLFSGLGIIVYVVYTCAVGV) form a helical membrane-spanning segment. Topologically, residues 317–398 (EIFLYCLGGS…SLIALAKSVI (82 aa)) are extracellular.

This sequence belongs to the insect chemoreceptor superfamily. Heteromeric odorant receptor channel (TC 1.A.69) family. Or1a subfamily. Interacts with Orco. Complexes exist early in the endomembrane system in olfactory sensory neurons (OSNs), coupling these complexes to the conserved ciliary trafficking pathway. As to expression, not expressed in either the antenna or maxillary palp.

It localises to the cell membrane. Odorant receptor which mediates acceptance or avoidance behavior, depending on its substrates. The odorant receptor repertoire encodes a large collection of odor stimuli that vary widely in identity, intensity, and duration. May form a complex with Orco to form odorant-sensing units, providing sensitive and prolonged odorant signaling and calcium permeability. Involved in the behavioral responses to pentanol, hexanol, octanol, nonanol, propyl acetate, butyl acetate, isoamyl acetate, methyl caproate, anisole, heptanal, 2-heptanone, r-carvone, and nonanoic acid. Also responds to pyrazines. The chain is Odorant receptor 24a (Or24a) from Drosophila melanogaster (Fruit fly).